A 573-amino-acid polypeptide reads, in one-letter code: Probable D-xylulose kinase A (573 aa).

Residues His-97, Arg-168, Asp-284, and Asn-285 each contribute to the substrate site. Residues Trp-366, 471–472 (GG), and Asn-475 each bind ATP.

Belongs to the FGGY kinase family.

It localises to the cytoplasm. It carries out the reaction D-xylulose + ATP = D-xylulose 5-phosphate + ADP + H(+). Its function is as follows. Highly specific D-xylulose kinase which participates in the catabolism of xylose. Xylose is a major component of hemicelluloses such as xylan. Most fungi utilize D-xylose via three enzymatic reactions, xylose reductase (XR), xylitol dehydrogenase (XDH), and xylulokinase, to form xylulose 5-phosphate, which enters pentose phosphate pathway. This is Probable D-xylulose kinase A (xkiA) from Aspergillus fumigatus (strain ATCC MYA-4609 / CBS 101355 / FGSC A1100 / Af293) (Neosartorya fumigata).